The primary structure comprises 170 residues: Small ribosomal subunit protein uS3mA (170 aa).

Residues 1–30 (MAAPVMSALGRLQGLIRTERSLLTHVQSRC) constitute a mitochondrion transit peptide.

Belongs to the universal ribosomal protein uS3 family. In terms of assembly, component of the mitochondrial ribosome small subunit (28S) which comprises a 12S rRNA and about 30 distinct proteins.

It is found in the mitochondrion. This is Small ribosomal subunit protein uS3mA (mrps24-a) from Xenopus laevis (African clawed frog).